The sequence spans 341 residues: MLLSCSIFRLFCIILLLQLGSIYTKDFTALCSTCRQLVDDFDKGLEKTAKQNFGGGNTAWEERKLSKYETSEIRLTEILEGLCQSSNFECSHMLEENEEHLEAWWFKRKTKHPDLFKWFCIETIKVCCPKGSFGPDCNTCIGGADRPCHGNGKCDGDGTRAGNGKCSCDEGYDGEFCLDCSDGYFNSLRNDTFFLCKECHESCVGCSGGTNQHCKECRNGWVKDQEGSCIDINECIKDPAPCSDDQYCLNTDGSFSCKACDIRCTGCKGDGASSCLNCADGYKDEEGTCTDIDECTEDPASCSDNQHCLNTDGSFSCEEKVPAFNSEGAKTGDSPEKHEDL.

An N-terminal signal peptide occupies residues 1–24 (MLLSCSIFRLFCIILLLQLGSIYT). One can recognise an EGF-like domain in the interval 136–178 (DCNTCIGGADRPCHGNGKCDGDGTRAGNGKCSCDEGYDGEFCL). 3 disulfides stabilise this stretch: Cys-140-Cys-154, Cys-148-Cys-166, and Cys-168-Cys-177. A glycan (N-linked (GlcNAc...) asparagine) is linked at Asn-190. FU repeat units lie at residues 193–248 (FFLC…DQYC) and 254–308 (SFSC…NQHC). An EGF-like 2; calcium-binding; truncated domain is found at 291–317 (DIDECTEDPASCSDNQHCLNTDGSFSC).

The protein belongs to the CRELD family.

It localises to the secreted. The protein localises to the endoplasmic reticulum. In terms of biological role, possible role in neuronal acetylcholine receptor transport. The chain is Cysteine-rich with EGF-like domain protein 2 (creld2) from Danio rerio (Zebrafish).